The sequence spans 741 residues: Translation initiation factor IF-2 (741 aa).

2 stretches are compositionally biased toward basic and acidic residues: residues 48-74 (HQYRPKAEKKTETKNEKKAEKKTDKPK) and 107-123 (KGKETKRTEAQQQEKKA). Residues 48–158 (HQYRPKAEKK…PQPAKKEKEL (111 aa)) form a disordered region. Residues 127 to 139 (AKKKGKGPAKGKK) are compositionally biased toward basic residues. Over residues 140-151 (QAAPAAKQVPQP) the composition is skewed to low complexity. The tr-type G domain maps to 242 to 411 (ERPPVVTIMG…LLVSEMEELK (170 aa)). Residues 251 to 258 (GHVDHGKT) are G1. 251–258 (GHVDHGKT) serves as a coordination point for GTP. Positions 276 to 280 (GITQH) are G2. The segment at 297-300 (DTPG) is G3. GTP is bound by residues 297 to 301 (DTPGH) and 351 to 354 (NKMD). A G4 region spans residues 351 to 354 (NKMD). The G5 stretch occupies residues 387 to 389 (SAK).

The protein belongs to the TRAFAC class translation factor GTPase superfamily. Classic translation factor GTPase family. IF-2 subfamily.

The protein localises to the cytoplasm. Functionally, one of the essential components for the initiation of protein synthesis. Protects formylmethionyl-tRNA from spontaneous hydrolysis and promotes its binding to the 30S ribosomal subunits. Also involved in the hydrolysis of GTP during the formation of the 70S ribosomal complex. The protein is Translation initiation factor IF-2 (infB) of Geobacillus stearothermophilus (Bacillus stearothermophilus).